The chain runs to 421 residues: ATP-dependent RNA helicase RhlB (421 aa).

The Q motif motif lies at 9–37 (QKFSDFALHPKVVEALEKKGFHNCTPIQA). The 180-residue stretch at 40-219 (LPLTLAGRDV…FEQMNNAEYI (180 aa)) folds into the Helicase ATP-binding domain. 53–60 (AQTGTGKT) contributes to the ATP binding site. The DEAD box motif lies at 165 to 168 (DEAD). Residues 245-390 (RLLQTLIEEE…VSKYNPDALM (146 aa)) enclose the Helicase C-terminal domain. Residues 392 to 421 (DLPKPLRLTRPRTGNGPRRTGAPRNRRRSG) form a disordered region. Over residues 402 to 414 (PRTGNGPRRTGAP) the composition is skewed to low complexity.

Belongs to the DEAD box helicase family. RhlB subfamily. As to quaternary structure, component of the RNA degradosome, which is a multiprotein complex involved in RNA processing and mRNA degradation.

It localises to the cytoplasm. The catalysed reaction is ATP + H2O = ADP + phosphate + H(+). In terms of biological role, DEAD-box RNA helicase involved in RNA degradation. Has RNA-dependent ATPase activity and unwinds double-stranded RNA. The polypeptide is ATP-dependent RNA helicase RhlB (Escherichia coli O139:H28 (strain E24377A / ETEC)).